The primary structure comprises 493 residues: Cobyric acid synthase (493 aa).

A GATase cobBQ-type domain is found at 246 to 440 (PIDIAVIKMP…IHGVFDGVVF (195 aa)). Catalysis depends on cysteine 326, which acts as the Nucleophile. Histidine 432 is a catalytic residue.

Belongs to the CobB/CobQ family. CobQ subfamily.

It functions in the pathway cofactor biosynthesis; adenosylcobalamin biosynthesis. Catalyzes amidations at positions B, D, E, and G on adenosylcobyrinic A,C-diamide. NH(2) groups are provided by glutamine, and one molecule of ATP is hydrogenolyzed for each amidation. The chain is Cobyric acid synthase from Clostridium botulinum (strain Okra / Type B1).